Consider the following 205-residue polypeptide: Thiamine-phosphate synthase (205 aa).

Residues 36–40 and Asp-68 contribute to the 4-amino-2-methyl-5-(diphosphooxymethyl)pyrimidine site; that span reads QYRRK. The Mg(2+) site is built by Asp-69 and Asp-88. Ser-106 is a binding site for 4-amino-2-methyl-5-(diphosphooxymethyl)pyrimidine. 132 to 134 lines the 2-[(2R,5Z)-2-carboxy-4-methylthiazol-5(2H)-ylidene]ethyl phosphate pocket; sequence SPT. Position 135 (Lys-135) interacts with 4-amino-2-methyl-5-(diphosphooxymethyl)pyrimidine. 2-[(2R,5Z)-2-carboxy-4-methylthiazol-5(2H)-ylidene]ethyl phosphate-binding positions include Gly-162 and 182–183; that span reads IS.

It belongs to the thiamine-phosphate synthase family. Requires Mg(2+) as cofactor.

The catalysed reaction is 2-[(2R,5Z)-2-carboxy-4-methylthiazol-5(2H)-ylidene]ethyl phosphate + 4-amino-2-methyl-5-(diphosphooxymethyl)pyrimidine + 2 H(+) = thiamine phosphate + CO2 + diphosphate. The enzyme catalyses 2-(2-carboxy-4-methylthiazol-5-yl)ethyl phosphate + 4-amino-2-methyl-5-(diphosphooxymethyl)pyrimidine + 2 H(+) = thiamine phosphate + CO2 + diphosphate. It carries out the reaction 4-methyl-5-(2-phosphooxyethyl)-thiazole + 4-amino-2-methyl-5-(diphosphooxymethyl)pyrimidine + H(+) = thiamine phosphate + diphosphate. The protein operates within cofactor biosynthesis; thiamine diphosphate biosynthesis; thiamine phosphate from 4-amino-2-methyl-5-diphosphomethylpyrimidine and 4-methyl-5-(2-phosphoethyl)-thiazole: step 1/1. In terms of biological role, condenses 4-methyl-5-(beta-hydroxyethyl)thiazole monophosphate (THZ-P) and 2-methyl-4-amino-5-hydroxymethyl pyrimidine pyrophosphate (HMP-PP) to form thiamine monophosphate (TMP). The protein is Thiamine-phosphate synthase of Caldivirga maquilingensis (strain ATCC 700844 / DSM 13496 / JCM 10307 / IC-167).